The primary structure comprises 911 residues: Bifunctional aspartokinase/homoserine dehydrogenase 1, chloroplastic (911 aa).

The N-terminal 82 residues, methionine 1–aspartate 82, are a transit peptide targeting the chloroplast. The segment at serine 83 to leucine 331 is aspartokinase. An interface region spans residues serine 332–isoleucine 557. ACT domains follow at residues valine 407–asparagine 482 and alanine 488–glycine 565. The interval isoleucine 558–serine 911 is homoserine dehydrogenase. Positions 563 and 644 each coordinate NAD(+). Residues isoleucine 563, threonine 644, and lysine 668 each contribute to the NADP(+) site. 3 residues coordinate NADPH: isoleucine 563, threonine 644, and lysine 668. Residues glutamate 695, valine 698, alanine 700, and leucine 702 each contribute to the Na(+) site. NADP(+) is bound by residues glycine 753 and glutamate 756. L-homoserine contacts are provided by glutamate 756 and aspartate 767. Lysine 771 functions as the Proton donor in the catalytic mechanism. Residue glycine 888 coordinates NAD(+). Residue glycine 888 participates in NADP(+) binding. Glycine 888 contributes to the NADPH binding site.

In the N-terminal section; belongs to the aspartokinase family. It in the C-terminal section; belongs to the homoserine dehydrogenase family. Homo- or heterodimer. A metal cation is required as a cofactor.

It localises to the plastid. The protein resides in the chloroplast. It carries out the reaction L-homoserine + NADP(+) = L-aspartate 4-semialdehyde + NADPH + H(+). The enzyme catalyses L-homoserine + NAD(+) = L-aspartate 4-semialdehyde + NADH + H(+). It catalyses the reaction L-aspartate + ATP = 4-phospho-L-aspartate + ADP. It participates in amino-acid biosynthesis; L-lysine biosynthesis via DAP pathway; (S)-tetrahydrodipicolinate from L-aspartate: step 1/4. The protein operates within amino-acid biosynthesis; L-methionine biosynthesis via de novo pathway; L-homoserine from L-aspartate: step 1/3. Its pathway is amino-acid biosynthesis; L-methionine biosynthesis via de novo pathway; L-homoserine from L-aspartate: step 3/3. It functions in the pathway amino-acid biosynthesis; L-threonine biosynthesis; L-threonine from L-aspartate: step 1/5. It participates in amino-acid biosynthesis; L-threonine biosynthesis; L-threonine from L-aspartate: step 3/5. Inhibition of aspartate kinase activity by threonine and leucine and 3-fold activation by cysteine, isoleucine, valine, serine and alanine at 2.5 mM. Partial inhibition of homoserine dehydrogenase activity by threonine and cysteine (14% of activity remaining at saturation with either amino acid). No synergy between the effectors for both activation or inhibition. Bifunctional aspartate kinase and homoserine dehydrogenase that catalyzes the first and the third steps toward the synthesis of lysine, methionine and threonine from aspartate. The chain is Bifunctional aspartokinase/homoserine dehydrogenase 1, chloroplastic from Arabidopsis thaliana (Mouse-ear cress).